Here is a 220-residue protein sequence, read N- to C-terminus: 3-dehydroquinate dehydratase (220 aa).

3-dehydroquinate-binding positions include Ser-8, 30 to 32 (ELR), and Arg-63. The active-site Proton donor/acceptor is the His-114. Lys-140 serves as the catalytic Schiff-base intermediate with substrate. Positions 174 and 197 each coordinate 3-dehydroquinate.

It belongs to the type-I 3-dehydroquinase family. As to quaternary structure, homodimer.

It catalyses the reaction 3-dehydroquinate = 3-dehydroshikimate + H2O. It functions in the pathway metabolic intermediate biosynthesis; chorismate biosynthesis; chorismate from D-erythrose 4-phosphate and phosphoenolpyruvate: step 3/7. Its function is as follows. Involved in the third step of the chorismate pathway, which leads to the biosynthesis of aromatic amino acids. Catalyzes the cis-dehydration of 3-dehydroquinate (DHQ) and introduces the first double bond of the aromatic ring to yield 3-dehydroshikimate. This is 3-dehydroquinate dehydratase from Saccharolobus solfataricus (strain ATCC 35092 / DSM 1617 / JCM 11322 / P2) (Sulfolobus solfataricus).